A 92-amino-acid chain; its full sequence is Small ribosomal subunit protein uS19c (92 aa).

The protein belongs to the universal ribosomal protein uS19 family.

It localises to the plastid. The protein localises to the chloroplast. In terms of biological role, protein S19 forms a complex with S13 that binds strongly to the 16S ribosomal RNA. The sequence is that of Small ribosomal subunit protein uS19c from Cycas taitungensis (Prince sago).